We begin with the raw amino-acid sequence, 896 residues long: DNA mismatch repair protein MutS (896 aa).

ATP is bound at residue 638–645 (GPNMSGKS).

It belongs to the DNA mismatch repair MutS family.

Functionally, this protein is involved in the repair of mismatches in DNA. It is possible that it carries out the mismatch recognition step. This protein has a weak ATPase activity. The polypeptide is DNA mismatch repair protein MutS (Fusobacterium nucleatum subsp. nucleatum (strain ATCC 25586 / DSM 15643 / BCRC 10681 / CIP 101130 / JCM 8532 / KCTC 2640 / LMG 13131 / VPI 4355)).